The chain runs to 162 residues: Interleukin-15 (162 aa).

The signal sequence occupies residues 1–29 (MRILKPYLRSTSIQCYLCLLLNSHFLTEA). A propeptide spanning residues 30–48 (CIPVFILSCINAGLPKTEA) is cleaved from the precursor. Intrachain disulfides connect cysteine 83/cysteine 133 and cysteine 90/cysteine 136. N-linked (GlcNAc...) asparagine glycans are attached at residues asparagine 104 and asparagine 127.

The protein belongs to the IL-15/IL-21 family.

The protein localises to the secreted. Its function is as follows. Cytokine that plays a major role in the development of inflammatory and protective immune responses to microbial invaders and parasites by modulating immune cells of both the innate and adaptive immune systems. Stimulates the proliferation of natural killer cells, T-cells and B-cells and promotes the secretion of several cytokines. In monocytes, induces the production of IL8 and monocyte chemotactic protein 1/CCL2, two chemokines that attract neutrophils and monocytes respectively to sites of infection. Unlike most cytokines, which are secreted in soluble form, IL15 is expressed in association with its high affinity IL15RA on the surface of IL15-producing cells and delivers signals to target cells that express IL2RB and IL2RG receptor subunits. Binding to its receptor triggers the phosphorylation of JAK1 and JAK3 and the recruitment and subsequent phosphorylation of signal transducer and activator of transcription-3/STAT3 and STAT5. In mast cells, induces the rapid tyrosine phosphorylation of STAT6 and thereby controls mast cell survival and release of cytokines such as IL4. This Felis catus (Cat) protein is Interleukin-15 (IL15).